An 83-amino-acid chain; its full sequence is Cytotoxin homolog 5 (83 aa).

Positions 1-21 (MKTLLLTMVVVTIVCLDLGYT) are cleaved as a signal peptide. 4 disulfide bridges follow: Cys-24–Cys-43, Cys-36–Cys-61, Cys-65–Cys-76, and Cys-77–Cys-82.

Belongs to the three-finger toxin family. Short-chain subfamily. Orphan group XV sub-subfamily. As to expression, expressed by the venom gland.

It localises to the secreted. The protein localises to the target cell membrane. Its function is as follows. Has low cytotoxic activity. The chain is Cytotoxin homolog 5 from Naja atra (Chinese cobra).